Here is a 102-residue protein sequence, read N- to C-terminus: PqqA binding protein (102 aa).

The protein belongs to the PqqD family. As to quaternary structure, monomer. Interacts with PqqE.

It functions in the pathway cofactor biosynthesis; pyrroloquinoline quinone biosynthesis. Functions as a PqqA binding protein and presents PqqA to PqqE, in the pyrroloquinoline quinone (PQQ) biosynthetic pathway. The protein is PqqA binding protein of Rhodopseudomonas palustris (strain TIE-1).